A 357-amino-acid polypeptide reads, in one-letter code: DNA integrity scanning protein DisA (357 aa).

The 139-residue stretch at R3–S141 folds into the DAC domain. Residues G70, L88, and T101–S105 contribute to the ATP site.

Belongs to the DisA family. Homooctamer. The cofactor is Mg(2+).

It catalyses the reaction 2 ATP = 3',3'-c-di-AMP + 2 diphosphate. Functionally, participates in a DNA-damage check-point. DisA forms globular foci that rapidly scan along the chromosomes searching for lesions. Also has diadenylate cyclase activity, catalyzing the condensation of 2 ATP molecules into cyclic di-AMP (c-di-AMP). c-di-AMP likely acts as a signaling molecule that may couple DNA integrity with a cellular process. This is DNA integrity scanning protein DisA from Mycobacterium avium (strain 104).